A 218-amino-acid polypeptide reads, in one-letter code: MGTYKAEDDYDYLFKVVLTGDSGVGKSNLLSRFTRNDFSHDSRSTIGVEFATRSIQVDDKIVKAQIWDTAGQERYRAITSAYYRGAVGALLVYDVTRHVTFENVERWLKELRDHTDANTVIMLVGNKADLNHLRAISTEEVKDFAERENTFFMETSALEAINVENAFTEVLTQIYRVVSKKALDAGDDPTTALPKGQMINVGSRDDVSAVKKSGCCAT.

20 to 27 is a binding site for GTP; it reads GDSGVGKS. An Effector region motif is present at residues 42–50; it reads SRSTIGVEF. GTP contacts are provided by residues 68 to 72, 126 to 129, and 156 to 157; these read DTAGQ, NKAD, and SA. Residues C215 and C216 are each lipidated (S-geranylgeranyl cysteine).

It belongs to the small GTPase superfamily. Rab family.

The protein localises to the cell membrane. Intracellular vesicle trafficking and protein transport. The chain is Ras-related protein RABA1h (RABA1H) from Arabidopsis thaliana (Mouse-ear cress).